The chain runs to 247 residues: Chymase (247 aa).

An N-terminal signal peptide occupies residues 1–19; the sequence is MNLHALCLLLLLLGSSTKA. Positions 20 to 21 are cleaved as a propeptide — activation peptide; that stretch reads GE. The Peptidase S1 domain maps to 22-245; it reads IIGGTECIPH…YRPWINKILR (224 aa). A disulfide bridge links cysteine 51 with cysteine 67. Residue histidine 66 is the Charge relay system of the active site. N-linked (GlcNAc...) asparagine glycosylation occurs at asparagine 80. Aspartate 110 (charge relay system) is an active-site residue. 2 disulfide bridges follow: cysteine 144–cysteine 209 and cysteine 175–cysteine 188. The active-site Charge relay system is the serine 203.

Belongs to the peptidase S1 family. Granzyme subfamily. Mast cells.

Its subcellular location is the secreted. It localises to the cytoplasmic granule. The catalysed reaction is Preferential cleavage: Phe-|-Xaa &gt; Tyr-|-Xaa &gt; Trp-|-Xaa &gt; Leu-|-Xaa.. Its function is as follows. Major secreted protease of mast cells with suspected roles in vasoactive peptide generation, extracellular matrix degradation, and regulation of gland secretion. This Rattus norvegicus (Rat) protein is Chymase (Cma1).